A 145-amino-acid polypeptide reads, in one-letter code: Maximins 3/H9 type 1 (145 aa).

The first 18 residues, Met-1–Ala-18, serve as a signal peptide directing secretion. Propeptides lie at residues Arg-19–Ile-43 and Arg-74–Arg-124. Isoleucine amide is present on Ile-144.

The protein belongs to the bombinin family. In terms of tissue distribution, expressed by the skin glands.

It localises to the secreted. In terms of biological role, maximin-3 shows antibacterial activity against both Gram-positive and Gram-negative bacteria. It also shows antimicrobial activity against the fungus C.albicans, but not against A.flavus nor P.uticale. It has little hemolytic activity. It possess a significant cytotoxicity against tumor cell lines. It possess a significant anti-HIV activity. It shows high spermicidal activity. Its function is as follows. Maximin-H9 shows antimicrobial activity against bacteria and against the fungus C.albicans. Shows strong hemolytic activity. In Bombina maxima (Giant fire-bellied toad), this protein is Maximins 3/H9 type 1.